The chain runs to 190 residues: Putative 3-methyladenine DNA glycosylase (190 aa).

This sequence belongs to the DNA glycosylase MPG family.

The polypeptide is Putative 3-methyladenine DNA glycosylase (Corynebacterium efficiens (strain DSM 44549 / YS-314 / AJ 12310 / JCM 11189 / NBRC 100395)).